The following is a 618-amino-acid chain: 1-deoxy-D-xylulose-5-phosphate synthase (618 aa).

Thiamine diphosphate-binding positions include His73 and 114–116 (GHS). Asp145 is a Mg(2+) binding site. Thiamine diphosphate-binding positions include 146-147 (GA), Asn174, Tyr284, and Glu364. Asn174 provides a ligand contact to Mg(2+).

The protein belongs to the transketolase family. DXPS subfamily. Homodimer. Requires Mg(2+) as cofactor. The cofactor is thiamine diphosphate.

The catalysed reaction is D-glyceraldehyde 3-phosphate + pyruvate + H(+) = 1-deoxy-D-xylulose 5-phosphate + CO2. It functions in the pathway metabolic intermediate biosynthesis; 1-deoxy-D-xylulose 5-phosphate biosynthesis; 1-deoxy-D-xylulose 5-phosphate from D-glyceraldehyde 3-phosphate and pyruvate: step 1/1. In terms of biological role, catalyzes the acyloin condensation reaction between C atoms 2 and 3 of pyruvate and glyceraldehyde 3-phosphate to yield 1-deoxy-D-xylulose-5-phosphate (DXP). This is 1-deoxy-D-xylulose-5-phosphate synthase from Clostridium beijerinckii (strain ATCC 51743 / NCIMB 8052) (Clostridium acetobutylicum).